Consider the following 1801-residue polypeptide: Protein mono-ADP-ribosyltransferase PARP14 (1801 aa).

Ser33 carries the phosphoserine modification. Residues 109–132 (SKTKEDVKEPDVSEELDTKLPLDG) form a disordered region. Macro domains follow at residues 791 to 978 (KCFS…KTVF), 1003 to 1190 (WEKG…ARRA), and 1216 to 1387 (DSGV…KKRE). Residues Asn824, Leu833, 922–926 (SSGVF), Asp961, 1023–1024 (VQ), Ser1034, 1046–1049 (LSKS), 1133–1137 (GTGNL), 1175–1178 (DHEN), 1235–1236 (DI), Ser1247, Val1258, 1332–1336 (GTGNA), and Phe1371 each bind a glycoprotein. Ser1403 and Ser1411 each carry phosphoserine. The WWE domain maps to 1523–1601 (EQESRADCIS…SLSVQRLTKS (79 aa)). The PARP catalytic domain maps to 1605–1801 (IPAHWSDMKQ…YPEYLITFRK (197 aa)).

The protein belongs to the ARTD/PARP family. Interacts with STAT6. Interacts with PARP10. Interacts with PARP9 in IFNG-stimulated macrophages; the interaction prevents PARP14-mediated STAT1 and STAT6 ADP-riboslylation. In terms of processing, auto-ADP-ribosylated. Expressed in macrophages.

The protein resides in the nucleus. The protein localises to the cytoplasm. The catalysed reaction is L-glutamyl-[protein] + NAD(+) = 5-O-(ADP-D-ribosyl)-L-glutamyl-[protein] + nicotinamide. ADP-ribosyltransferase that mediates mono-ADP-ribosylation of glutamate residues on target proteins. In contrast to PARP1 and PARP2, it is not able to mediate poly-ADP-ribosylation. Has been shown to catalyze the mono-ADP-ribosylation of STAT1 at 'Glu-657' and 'Glu-705', thus decreasing STAT1 phosphorylation which negatively regulates pro-inflammatory cytokine production in macrophages in response to IFNG stimulation. However, the role of ADP-ribosylation in the prevention of STAT1 phosphorylation has been called into question and it has been suggested that the inhibition of phosphorylation may be the result of sumoylation of STAT1 'Lys-703'. Mono-ADP-ribosylates STAT6; enhancing STAT6-dependent transcription. In macrophages, positively regulates MRC1 expression in response to IL4 stimulation by promoting STAT6 phosphorylation. Mono-ADP-ribosylates PARP9. This chain is Protein mono-ADP-ribosyltransferase PARP14, found in Homo sapiens (Human).